Here is a 156-residue protein sequence, read N- to C-terminus: Large ribosomal subunit protein uL22 (156 aa).

Belongs to the universal ribosomal protein uL22 family. Part of the 50S ribosomal subunit.

Functionally, this protein binds specifically to 23S rRNA. It makes multiple contacts with different domains of the 23S rRNA in the assembled 50S subunit and ribosome. In terms of biological role, the globular domain of the protein is located near the polypeptide exit tunnel on the outside of the subunit, while an extended beta-hairpin is found that lines the wall of the exit tunnel in the center of the 70S ribosome. The sequence is that of Large ribosomal subunit protein uL22 from Halobacterium salinarum (strain ATCC 700922 / JCM 11081 / NRC-1) (Halobacterium halobium).